Consider the following 344-residue polypeptide: Mycothiol acetyltransferase (344 aa).

1D-myo-inositol 2-(L-cysteinylamino)-2-deoxy-alpha-D-glucopyranoside is bound at residue E36. 2 consecutive N-acetyltransferase domains span residues 40–179 (LALR…TPLP) and 187–344 (VTVR…PSTG). Positions 61–83 (ADTSGPNVPDTPGDQNAADTSTM) are disordered. Positions 73–83 (GDQNAADTSTM) are enriched in polar residues. Residue 109–111 (VVV) coordinates acetyl-CoA. Residues E214, K253, and E272 each contribute to the 1D-myo-inositol 2-(L-cysteinylamino)-2-deoxy-alpha-D-glucopyranoside site. Residues 276-278 (VGV) and 283-289 (GGAGLGR) contribute to the acetyl-CoA site. Y310 serves as a coordination point for 1D-myo-inositol 2-(L-cysteinylamino)-2-deoxy-alpha-D-glucopyranoside. 315–320 (NVRAVR) serves as a coordination point for acetyl-CoA.

The protein belongs to the acetyltransferase family. MshD subfamily. In terms of assembly, monomer.

The enzyme catalyses 1D-myo-inositol 2-(L-cysteinylamino)-2-deoxy-alpha-D-glucopyranoside + acetyl-CoA = mycothiol + CoA + H(+). In terms of biological role, catalyzes the transfer of acetyl from acetyl-CoA to desacetylmycothiol (Cys-GlcN-Ins) to form mycothiol. The polypeptide is Mycothiol acetyltransferase (Frankia casuarinae (strain DSM 45818 / CECT 9043 / HFP020203 / CcI3)).